Here is a 427-residue protein sequence, read N- to C-terminus: Adenylosuccinate synthetase (427 aa).

GTP contacts are provided by residues 13-19 and 41-43; these read GDEGKGK and GHT. Residue aspartate 14 is the Proton acceptor of the active site. Residues aspartate 14 and glycine 41 each coordinate Mg(2+). IMP is bound by residues 14–17, 39–42, threonine 129, arginine 143, glutamine 224, threonine 239, and arginine 303; these read DEGK and NAGH. Histidine 42 acts as the Proton donor in catalysis. The segment at 117–137 is disordered; it reads QEKQRGEESLGTTKRGIGPAY. 299–305 provides a ligand contact to substrate; sequence TTTGRPR. Residues arginine 305, 331–333, and 414–416 contribute to the GTP site; these read KLD and GTG.

It belongs to the adenylosuccinate synthetase family. As to quaternary structure, homodimer. Mg(2+) serves as cofactor.

Its subcellular location is the cytoplasm. The catalysed reaction is IMP + L-aspartate + GTP = N(6)-(1,2-dicarboxyethyl)-AMP + GDP + phosphate + 2 H(+). The protein operates within purine metabolism; AMP biosynthesis via de novo pathway; AMP from IMP: step 1/2. Its function is as follows. Plays an important role in the de novo pathway of purine nucleotide biosynthesis. Catalyzes the first committed step in the biosynthesis of AMP from IMP. The sequence is that of Adenylosuccinate synthetase from Caldicellulosiruptor saccharolyticus (strain ATCC 43494 / DSM 8903 / Tp8T 6331).